The following is a 367-amino-acid chain: Uroporphyrinogen decarboxylase (367 aa).

Substrate contacts are provided by residues Arg-28 to Arg-32, Asp-78, Tyr-158, Thr-213, and His-334.

It belongs to the uroporphyrinogen decarboxylase family. In terms of assembly, homodimer.

It is found in the cytoplasm. The enzyme catalyses uroporphyrinogen III + 4 H(+) = coproporphyrinogen III + 4 CO2. It participates in porphyrin-containing compound metabolism; protoporphyrin-IX biosynthesis; coproporphyrinogen-III from 5-aminolevulinate: step 4/4. Functionally, catalyzes the decarboxylation of four acetate groups of uroporphyrinogen-III to yield coproporphyrinogen-III. In Ralstonia pickettii (strain 12J), this protein is Uroporphyrinogen decarboxylase.